The primary structure comprises 523 residues: Bifunctional purine biosynthesis protein PurH (523 aa).

The 145-residue stretch at 1 to 145 (MIKQALLSVS…KNHRDVTVIV (145 aa)) folds into the MGS-like domain.

Belongs to the PurH family.

It carries out the reaction (6R)-10-formyltetrahydrofolate + 5-amino-1-(5-phospho-beta-D-ribosyl)imidazole-4-carboxamide = 5-formamido-1-(5-phospho-D-ribosyl)imidazole-4-carboxamide + (6S)-5,6,7,8-tetrahydrofolate. The enzyme catalyses IMP + H2O = 5-formamido-1-(5-phospho-D-ribosyl)imidazole-4-carboxamide. Its pathway is purine metabolism; IMP biosynthesis via de novo pathway; 5-formamido-1-(5-phospho-D-ribosyl)imidazole-4-carboxamide from 5-amino-1-(5-phospho-D-ribosyl)imidazole-4-carboxamide (10-formyl THF route): step 1/1. It functions in the pathway purine metabolism; IMP biosynthesis via de novo pathway; IMP from 5-formamido-1-(5-phospho-D-ribosyl)imidazole-4-carboxamide: step 1/1. The polypeptide is Bifunctional purine biosynthesis protein PurH (Cupriavidus pinatubonensis (strain JMP 134 / LMG 1197) (Cupriavidus necator (strain JMP 134))).